Reading from the N-terminus, the 694-residue chain is Elongation factor G (694 aa).

Positions 8–282 (KDYRNIGIMA…AVIDYLPSPV (275 aa)) constitute a tr-type G domain. Residues 17 to 24 (AHIDAGKT), 81 to 85 (DTPGH), and 135 to 138 (NKMD) each bind GTP.

The protein belongs to the TRAFAC class translation factor GTPase superfamily. Classic translation factor GTPase family. EF-G/EF-2 subfamily.

Its subcellular location is the cytoplasm. In terms of biological role, catalyzes the GTP-dependent ribosomal translocation step during translation elongation. During this step, the ribosome changes from the pre-translocational (PRE) to the post-translocational (POST) state as the newly formed A-site-bound peptidyl-tRNA and P-site-bound deacylated tRNA move to the P and E sites, respectively. Catalyzes the coordinated movement of the two tRNA molecules, the mRNA and conformational changes in the ribosome. This chain is Elongation factor G, found in Mesomycoplasma hyopneumoniae (strain J / ATCC 25934 / NCTC 10110) (Mycoplasma hyopneumoniae).